Here is a 522-residue protein sequence, read N- to C-terminus: Tryptophan 2-halogenase (522 aa).

Residues A17, E36, R42, H44, I45, S48, R103, I127, and D296 each contribute to the FAD site. Positions 307 and 308 each coordinate chloride. Position 309 (V309) interacts with FAD.

This sequence belongs to the flavin-dependent halogenase family.

Its function is as follows. Involved in the incorporation of a chlorinated tryptophan residue into halogenated forms of the secondary metabolites called chondramides. This Chondromyces crocatus protein is Tryptophan 2-halogenase.